The primary structure comprises 126 residues: Acidic phospholipase A2 3 (126 aa).

Residues 1-7 constitute a propeptide that is removed on maturation; it reads SNRPMPL. 7 disulfide bridges follow: cysteine 18-cysteine 78, cysteine 33-cysteine 125, cysteine 35-cysteine 51, cysteine 50-cysteine 106, cysteine 57-cysteine 99, cysteine 67-cysteine 92, and cysteine 85-cysteine 97. Positions 34, 36, and 38 each coordinate Ca(2+). The active site involves histidine 54. Aspartate 55 is a binding site for Ca(2+). Residue aspartate 100 is part of the active site.

It belongs to the phospholipase A2 family. Group I subfamily. D49 sub-subfamily. The cofactor is Ca(2+). As to expression, expressed by the venom gland.

Its subcellular location is the secreted. It carries out the reaction a 1,2-diacyl-sn-glycero-3-phosphocholine + H2O = a 1-acyl-sn-glycero-3-phosphocholine + a fatty acid + H(+). In terms of biological role, PLA2 catalyzes the calcium-dependent hydrolysis of the 2-acyl groups in 3-sn-phosphoglycerides. This Naja sagittifera (Andaman cobra) protein is Acidic phospholipase A2 3.